Here is a 359-residue protein sequence, read N- to C-terminus: Aminomethyltransferase (359 aa).

It belongs to the GcvT family. In terms of assembly, the glycine cleavage system is composed of four proteins: P, T, L and H.

It carries out the reaction N(6)-[(R)-S(8)-aminomethyldihydrolipoyl]-L-lysyl-[protein] + (6S)-5,6,7,8-tetrahydrofolate = N(6)-[(R)-dihydrolipoyl]-L-lysyl-[protein] + (6R)-5,10-methylene-5,6,7,8-tetrahydrofolate + NH4(+). Functionally, the glycine cleavage system catalyzes the degradation of glycine. The polypeptide is Aminomethyltransferase (Alcanivorax borkumensis (strain ATCC 700651 / DSM 11573 / NCIMB 13689 / SK2)).